We begin with the raw amino-acid sequence, 199 residues long: MSQSHFFAYLSRLKLINRWPLMRNVRTENVSEHSLQVAMVAHALAVIKNRKFQGNVNPERIALLAMYHDASEVLTGDLPTPVKYFNSQIAHEYKAIEKIAQQKLIAMVPEELQDIFAPLLDEHHYTEDEKSLVKQADALCAYLKCLEELSAGNNEFLLAKSRLEKTLAQRHSAEMDYFMQVFVPSFHLSLDEISQDSPL.

Substrate is bound by residues 18-19 and His-33; that span reads RW. Residues 30-142 form the HD domain; sequence VSEHSLQVAM…VKQADALCAY (113 aa). Positions 33, 68, and 69 each coordinate a divalent metal cation. Residues Asp-69, 77 to 80, and Asp-137 each bind substrate; that span reads DLPT. Asp-137 contacts a divalent metal cation.

The protein belongs to the 5DNU family. As to quaternary structure, homodimer. The cofactor is a divalent metal cation.

It localises to the cytoplasm. The catalysed reaction is a 2'-deoxyribonucleoside 5'-phosphate + H2O = a 2'-deoxyribonucleoside + phosphate. Functionally, catalyzes the strictly specific dephosphorylation of 2'-deoxyribonucleoside 5'-monophosphates. In Cronobacter sakazakii (strain ATCC BAA-894) (Enterobacter sakazakii), this protein is 5'-deoxynucleotidase ESA_00928.